The chain runs to 557 residues: Membrane protein insertase YidC (557 aa).

Transmembrane regions (helical) follow at residues 6 to 26 (TILW…WQVH), 219 to 239 (IGPF…IYTD), 367 to 387 (IVGN…LAFF), 437 to 457 (LGGC…YWVL), and 514 to 534 (MPIV…LYWV).

This sequence belongs to the OXA1/ALB3/YidC family. Type 1 subfamily. Interacts with the Sec translocase complex via SecD. Specifically interacts with transmembrane segments of nascent integral membrane proteins during membrane integration.

It localises to the cell inner membrane. Functionally, required for the insertion and/or proper folding and/or complex formation of integral membrane proteins into the membrane. Involved in integration of membrane proteins that insert both dependently and independently of the Sec translocase complex, as well as at least some lipoproteins. Aids folding of multispanning membrane proteins. In Polynucleobacter asymbioticus (strain DSM 18221 / CIP 109841 / QLW-P1DMWA-1) (Polynucleobacter necessarius subsp. asymbioticus), this protein is Membrane protein insertase YidC.